The sequence spans 148 residues: UPF0260 protein PM0539 (148 aa).

It belongs to the UPF0260 family.

This Pasteurella multocida (strain Pm70) protein is UPF0260 protein PM0539.